We begin with the raw amino-acid sequence, 279 residues long: Putative biopolymer transport protein ExbB homolog (279 aa).

3 consecutive transmembrane segments (helical) span residues 19–39 (SGGV…ITAL), 126–146 (IIEV…WYTF), and 162–182 (IYVA…LMPL).

It belongs to the ExbB/TolQ family.

Its subcellular location is the cell membrane. The sequence is that of Putative biopolymer transport protein ExbB homolog from Methanothermobacter thermautotrophicus (strain ATCC 29096 / DSM 1053 / JCM 10044 / NBRC 100330 / Delta H) (Methanobacterium thermoautotrophicum).